A 700-amino-acid chain; its full sequence is Elongation factor G (700 aa).

In terms of domain architecture, tr-type G spans 10-286 (TKVRNIGIMA…AVVDYLPSPL (277 aa)). Residues 19-26 (AHIDAGKT), 83-87 (DTPGH), and 137-140 (NKMD) each bind GTP.

The protein belongs to the TRAFAC class translation factor GTPase superfamily. Classic translation factor GTPase family. EF-G/EF-2 subfamily.

Its subcellular location is the cytoplasm. In terms of biological role, catalyzes the GTP-dependent ribosomal translocation step during translation elongation. During this step, the ribosome changes from the pre-translocational (PRE) to the post-translocational (POST) state as the newly formed A-site-bound peptidyl-tRNA and P-site-bound deacylated tRNA move to the P and E sites, respectively. Catalyzes the coordinated movement of the two tRNA molecules, the mRNA and conformational changes in the ribosome. This is Elongation factor G from Saccharopolyspora erythraea (strain ATCC 11635 / DSM 40517 / JCM 4748 / NBRC 13426 / NCIMB 8594 / NRRL 2338).